The primary structure comprises 341 residues: Methionine import ATP-binding protein MetN 3 (341 aa).

One can recognise an ABC transporter domain in the interval 2-241; the sequence is ILLENVKKIY…PQQDITKRFV (240 aa). 38–45 is a binding site for ATP; sequence GYSGAGKS.

It belongs to the ABC transporter superfamily. Methionine importer (TC 3.A.1.24) family. As to quaternary structure, the complex is composed of two ATP-binding proteins (MetN), two transmembrane proteins (MetI) and a solute-binding protein (MetQ).

It localises to the cell membrane. The enzyme catalyses L-methionine(out) + ATP + H2O = L-methionine(in) + ADP + phosphate + H(+). The catalysed reaction is D-methionine(out) + ATP + H2O = D-methionine(in) + ADP + phosphate + H(+). Its function is as follows. Part of the ABC transporter complex MetNIQ involved in methionine import. Responsible for energy coupling to the transport system. The polypeptide is Methionine import ATP-binding protein MetN 3 (Bacillus anthracis).